The primary structure comprises 23 residues: Retinol-binding protein 3 (23 aa).

It localises to the secreted. It is found in the extracellular space. The protein resides in the extracellular matrix. Its subcellular location is the interphotoreceptor matrix. Functionally, IRBP shuttles 11-cis and all trans retinoids between the retinol isomerase in the pigment epithelium and the visual pigments in the photoreceptor cells of the retina. The sequence is that of Retinol-binding protein 3 (RBP3) from Oryctolagus cuniculus (Rabbit).